A 341-amino-acid polypeptide reads, in one-letter code: tRNA N6-adenosine threonylcarbamoyltransferase (341 aa).

2 residues coordinate Fe cation: H111 and H115. Substrate-binding positions include 134–138 (LVSGG), D167, G180, and N277. Fe cation is bound at residue D305.

It belongs to the KAE1 / TsaD family. Fe(2+) is required as a cofactor.

The protein resides in the cytoplasm. The catalysed reaction is L-threonylcarbamoyladenylate + adenosine(37) in tRNA = N(6)-L-threonylcarbamoyladenosine(37) in tRNA + AMP + H(+). Functionally, required for the formation of a threonylcarbamoyl group on adenosine at position 37 (t(6)A37) in tRNAs that read codons beginning with adenine. Is involved in the transfer of the threonylcarbamoyl moiety of threonylcarbamoyl-AMP (TC-AMP) to the N6 group of A37, together with TsaE and TsaB. TsaD likely plays a direct catalytic role in this reaction. This chain is tRNA N6-adenosine threonylcarbamoyltransferase, found in Chromobacterium violaceum (strain ATCC 12472 / DSM 30191 / JCM 1249 / CCUG 213 / NBRC 12614 / NCIMB 9131 / NCTC 9757 / MK).